Here is a 280-residue protein sequence, read N- to C-terminus: Pantothenate synthetase (280 aa).

Position 31 to 38 (31 to 38 (MGNLHVGH)) interacts with ATP. The Proton donor role is filled by His38. Gln62 lines the (R)-pantoate pocket. Residue Gln62 coordinates beta-alanine. 150 to 153 (GKKD) provides a ligand contact to ATP. Gln156 provides a ligand contact to (R)-pantoate. Residues Val179 and 187-190 (MSSR) contribute to the ATP site.

The protein belongs to the pantothenate synthetase family. As to quaternary structure, homodimer.

Its subcellular location is the cytoplasm. The catalysed reaction is (R)-pantoate + beta-alanine + ATP = (R)-pantothenate + AMP + diphosphate + H(+). It functions in the pathway cofactor biosynthesis; (R)-pantothenate biosynthesis; (R)-pantothenate from (R)-pantoate and beta-alanine: step 1/1. In terms of biological role, catalyzes the condensation of pantoate with beta-alanine in an ATP-dependent reaction via a pantoyl-adenylate intermediate. The sequence is that of Pantothenate synthetase from Xanthomonas oryzae pv. oryzae (strain KACC10331 / KXO85).